The sequence spans 873 residues: Inner centromere protein A (873 aa).

7 disordered regions span residues Ala-50 to Thr-124, Pro-237 to Lys-270, Phe-282 to His-452, Lys-484 to Arg-535, Gln-566 to Gln-649, Leu-683 to Ala-736, and Asp-781 to Ala-800. A compositionally biased stretch (basic residues) spans Ser-60 to Thr-69. Residues Arg-87 to Gln-105 are compositionally biased toward low complexity. Positions Asn-239 to Gly-254 are enriched in polar residues. A compositionally biased stretch (basic residues) spans Ser-261–Lys-270. Positions Ser-286–Arg-297 are enriched in basic and acidic residues. Over residues Ser-314–Ser-325 the composition is skewed to low complexity. Residues Pro-437–His-452 show a composition bias toward pro residues. Composition is skewed to basic and acidic residues over residues Thr-491–Arg-535, Gln-566–Ala-584, Lys-591–Gln-649, and Leu-683–Glu-733. Residues Lys-494 to Glu-707 form an SAH region. The interval Leu-782–Pro-856 is IN box. Residues Ser-849 and Ser-850 each carry the phosphoserine modification.

It belongs to the INCENP family. In terms of assembly, component of the CPC composed of survivin/birc5, incenp, cdca8/borealin and/or cdca9/dasra-A, and aurkb/aurora-B. Interacts (via C-terminus) with aurkb (via N-terminus and kinase domain). Interacts (via N-terminus) with birc5.1, birc5.2, cdca8 and cdca9. Interacts with mtus1.

The protein localises to the nucleus. Its subcellular location is the chromosome. The protein resides in the centromere. It localises to the cytoplasm. It is found in the cytoskeleton. The protein localises to the spindle. Its subcellular location is the midbody. The protein resides in the kinetochore. Component of the chromosomal passenger complex (CPC), a complex that acts as a key regulator of mitosis. The CPC complex has essential functions at the centromere in ensuring correct chromosome alignment and segregation and is required for chromatin-induced microtubule stabilization and spindle assembly. Acts as a scaffold regulating CPC localization and activity. The C-terminus associates with aurkb/aurora-B, the N-terminus associated with cdca8/borealin and/or cdca9/dasra-A tethers the CPC to the inner centromere, and the microtubule binding activity within the central SAH domain directs aurkb/aurora-B toward substrates near microtubules. Activates aurkb. The protein is Inner centromere protein A (incenp-a) of Xenopus laevis (African clawed frog).